A 446-amino-acid polypeptide reads, in one-letter code: Phosphoglucosamine mutase (446 aa).

The Phosphoserine intermediate role is filled by Ser-100. Positions 100, 241, 243, and 245 each coordinate Mg(2+). At Ser-100 the chain carries Phosphoserine.

This sequence belongs to the phosphohexose mutase family. Mg(2+) is required as a cofactor. Activated by phosphorylation.

It catalyses the reaction alpha-D-glucosamine 1-phosphate = D-glucosamine 6-phosphate. Functionally, catalyzes the conversion of glucosamine-6-phosphate to glucosamine-1-phosphate. The sequence is that of Phosphoglucosamine mutase from Methylobacterium nodulans (strain LMG 21967 / CNCM I-2342 / ORS 2060).